Consider the following 643-residue polypeptide: Transmembrane 9 superfamily member 4 (643 aa).

A signal peptide spans 1–23; the sequence is MAAAMIWWPRFLLLLCLTCKGST. At 24–282 the chain is on the extracellular side; it reads FYVPGVAPIN…TMSDVQIHWF (259 aa). The chain crosses the membrane as a helical span at residues 283-303; it reads SIINSVVVVFFLSGILSMIII. Topologically, residues 304–347 are cytoplasmic; the sequence is RTLRKDIANYNKEDDIEDTMEESGWKLVHGDVFRPPQYPMILSS. Phosphotyrosine is present on tyrosine 313. Residues 348-368 traverse the membrane as a helical segment; it reads LLGSGIQLFCMILIVIFVAML. Residues 369-377 are Extracellular-facing; it reads GMLSPSSRG. The helical transmembrane segment at 378–398 threads the bilayer; it reads ALMTTACFLFMFMGVFGGFSA. Residues 399-417 lie on the Cytoplasmic side of the membrane; sequence GRLYRTLKGHRWKKGAFCT. A helical transmembrane segment spans residues 418 to 438; sequence ATLYPGVVFGICFVLNCFIWG. Residues 439–450 lie on the Extracellular side of the membrane; the sequence is KHSSGAVPFPTM. Residues 451 to 471 traverse the membrane as a helical segment; sequence VALLCMWFGISLPLVYLGYYF. At 472-502 the chain is on the cytoplasmic side; the sequence is GFRKQPYDNPVRTNQIPRQIPEQRWYMNRFV. A helical membrane pass occupies residues 503–523; the sequence is GILMAGILPFGAMFIELFFIF. The Extracellular portion of the chain corresponds to 524–536; the sequence is SAIWENQFYYLFG. Residues 537 to 557 form a helical membrane-spanning segment; sequence FLFLVFIILVVSCSQISIVMV. At 558–571 the chain is on the cytoplasmic side; that stretch reads YFQLCAEDYRWWWR. A helical transmembrane segment spans residues 572 to 592; it reads NFLVSGGSAFYVLVYAIFYFV. The Extracellular segment spans residues 593–599; sequence NKLDIVE. Residues 600-620 form a helical membrane-spanning segment; it reads FIPSLLYFGYTTLMVLSFWLL. The Cytoplasmic portion of the chain corresponds to 621–643; sequence TGTIGFYAAYMFVRKIYAAVKID.

It belongs to the nonaspanin (TM9SF) (TC 9.A.2) family.

Its subcellular location is the membrane. It is found in the golgi apparatus. The protein resides in the early endosome. Its function is as follows. Associates with proteins harboring glycine-rich transmembrane domains and ensures their efficient localization to the cell surface. This chain is Transmembrane 9 superfamily member 4 (Tm9sf4), found in Rattus norvegicus (Rat).